The primary structure comprises 255 residues: Methanethiol S-methyltransferase (255 aa).

5 consecutive transmembrane segments (helical) span residues 16–36 (FVLL…VYAV), 56–76 (LVTA…QHSV), 99–119 (YVLF…PIGI), 131–151 (IIFY…TFLI), and 191–211 (VGWF…LVFA).

It belongs to the nurim family.

It localises to the membrane. The enzyme catalyses methanethiol + S-adenosyl-L-methionine = dimethyl sulfide + S-adenosyl-L-homocysteine + H(+). In terms of biological role, catalyzes the methylation of methanethiol (MeSH) to yield dimethylsulphide (DMS). This is Methanethiol S-methyltransferase from Crocosphaera subtropica (strain ATCC 51142 / BH68) (Cyanothece sp. (strain ATCC 51142)).